An 833-amino-acid chain; its full sequence is Heat shock transcription factor (833 aa).

Met1 carries the N-acetylmethionine modification. A compositionally biased stretch (polar residues) spans 1 to 16 (MNNAANTGTTNESNVS). Disordered stretches follow at residues 1–31 (MNNA…NDDD) and 62–92 (NPSL…STHL). Over residues 69-80 (SAASPVPSSSFF) the composition is skewed to low complexity. Position 97 is a phosphothreonine (Thr97). Positions 150–161 (PSSGTTNAQPRQ) are enriched in polar residues. Disordered stretches follow at residues 150–170 (PSSG…QSHK) and 277–309 (GSSN…NNSN). Residues 170–259 (KSRPAFVNKL…SDDKWQFENE (90 aa)) mediate DNA binding. The flexible linker stretch occupies residues 260-280 (NFIRGREDLLEKIIRQKGSSN). Positions 277-296 (GSSNNHNSPSGNGNPANGSN) are enriched in low complexity. The segment at 350 to 403 (ELEQIKYNQIAISKDLLRINKDNELLWQENMMARERHRTQQQALEKMFRFLTSI) is involved in trimerization. Residues 447-457 (SNDSFINDDRN) are compositionally biased toward basic and acidic residues. Residues 447–493 (SNDSFINDDRNSFTNATTNARNNMSPNNDDNSIDTASTNTTNRKKNI) are disordered. Phosphoserine occurs at positions 450, 458, 471, 478, and 528. Residues 458 to 487 (SFTNATTNARNNMSPNNDDNSIDTASTNTT) show a composition bias toward polar residues. A compositionally biased stretch (polar residues) spans 542–554 (RANSSTSSENPSL). Disordered regions lie at residues 542 to 626 (RANS…HNES), 657 to 765 (GYPN…RVSP), and 778 to 799 (SDNL…APEN). Acidic residues predominate over residues 571–580 (PFDDEEEEET). Over residues 588–600 (RDPNNQTSENTFD) the composition is skewed to polar residues. Positions 610–626 (DDLKKDSHTNDNKHNES) are enriched in basic and acidic residues. Positions 660 to 675 (NKSFNNKTSSTNTNSN) are enriched in low complexity. Residues 676–687 (MESAVNVNSPGF) show a composition bias toward polar residues. The span at 697 to 713 (SNSPNSVHSVPSNGSGS) shows a compositional bias: low complexity. 3 stretches are compositionally biased toward polar residues: residues 727–739 (ASTS…NGSG), 752–763 (NDNNTSEGSTRV), and 778–794 (SDNL…TQAD).

It belongs to the HSF family. In terms of assembly, homotrimer. Homotrimerization increases the affinity of HSF1 to DNA. Exhibits temperature-dependent phosphorylation that activates the transcriptional capacity.

The protein localises to the nucleus. DNA-binding transcription factor that specifically binds heat shock promoter elements (HSE) and activates transcription. This is Heat shock transcription factor from Saccharomyces cerevisiae (strain ATCC 204508 / S288c) (Baker's yeast).